The primary structure comprises 91 residues: Large ribosomal subunit protein bL27 (91 aa).

Belongs to the bacterial ribosomal protein bL27 family.

This Pseudomonas savastanoi pv. phaseolicola (strain 1448A / Race 6) (Pseudomonas syringae pv. phaseolicola (strain 1448A / Race 6)) protein is Large ribosomal subunit protein bL27.